A 227-amino-acid chain; its full sequence is Spore coat protein O (227 aa).

Over residues 1-10 the composition is skewed to basic residues; it reads MKMSNKKRNA. A disordered region spans residues 1 to 157; that stretch reads MKMSNKKRNA…PARKVKKPMS (157 aa). 3 stretches are compositionally biased toward basic and acidic residues: residues 35-60, 85-100, and 108-147; these read VIKR…KQQE, EARE…EQKA, and TVEH…EKAP.

The protein localises to the spore coat. Has an important morphogenetic role. Involved in the assembly of at least five coat proteins, including CotB, CotG, CotS, CotSA and CotW. Required for appearance of a morphologically normal outer coat. To a large degree, CotO and CotH act at a late stage of coat assembly from within the outer coat to direct maturation of this structure. The sequence is that of Spore coat protein O (cotO) from Bacillus subtilis (strain 168).